The chain runs to 178 residues: Large ribosomal subunit protein uL6 (178 aa).

It belongs to the universal ribosomal protein uL6 family. In terms of assembly, part of the 50S ribosomal subunit.

Functionally, this protein binds to the 23S rRNA, and is important in its secondary structure. It is located near the subunit interface in the base of the L7/L12 stalk, and near the tRNA binding site of the peptidyltransferase center. The polypeptide is Large ribosomal subunit protein uL6 (Methanobrevibacter smithii (strain ATCC 35061 / DSM 861 / OCM 144 / PS)).